The primary structure comprises 1202 residues: Nucleolar protein 6 (1202 aa).

The segment at 1 to 64 (MNKTKRKQQS…KKYKDNETNK (64 aa)) is disordered.

This sequence belongs to the NRAP family. Part of the small subunit (SSU) processome, composed of more than 70 proteins and the RNA chaperone small nucleolar RNA (snoRNA) U3.

The protein localises to the nucleus. It localises to the nucleolus. It is found in the chromosome. Functionally, part of the small subunit (SSU) processome, first precursor of the small eukaryotic ribosomal subunit. During the assembly of the SSU processome in the nucleolus, many ribosome biogenesis factors, an RNA chaperone and ribosomal proteins associate with the nascent pre-rRNA and work in concert to generate RNA folding, modifications, rearrangements and cleavage as well as targeted degradation of pre-ribosomal RNA by the RNA exosome. The sequence is that of Nucleolar protein 6 from Drosophila willistoni (Fruit fly).